A 317-amino-acid chain; its full sequence is Hydroxyacyl-CoA dehydrogenase ChsB1 (317 aa).

NAD(+) is bound by residues L32, D51, D82, I83, N108, S168, Y181, K185, and T215. Active-site residues include S168, Y181, and K185.

It belongs to the short-chain dehydrogenases/reductases (SDR) family. In terms of assembly, homodimer, with 1 active site on each face.

It carries out the reaction (22S)-hydroxy-3-oxo-chol-4-ene-24-oyl-CoA + NAD(+) = 3,22-dioxochol-4-en-24-oyl-CoA + NADH + H(+). It participates in steroid metabolism; cholesterol degradation. Functionally, a reversible dehydrogenase involved in cholesterol side-chain degradation. Catalyzes the oxidation of hydroxyl-cholesterol-CoA ester metabolic intermediate (22S)-HOCO-CoA (3-oxo-chol-4-ene-(22S)-hydroxy-24-oyl-CoA), the product of ChsH3, has no activity on (22R)-HOCO-CoA (the product of EchA19). Also acts on (3R)-hydroxyoctanoyl-CoA and 17-beta-hydroxyandrost-4-en-3-one, but not on 7-alpha-hydroxyandrost-4-en-3-one, uses NAD(+) but not NADP(+). This Mycobacterium tuberculosis (strain ATCC 25618 / H37Rv) protein is Hydroxyacyl-CoA dehydrogenase ChsB1.